The primary structure comprises 181 residues: Inner membrane-spanning protein YciB (181 aa).

5 helical membrane-spanning segments follow: residues 19-39 (FFDIYAATGALIVATLIQLIA), 50-70 (MHLITFALVASFGTATLIFHD), 80-100 (IVYALFAIALIAGQFLGKPIL), 118-138 (LTWYWVLFFVACGLINIYVAF), and 148-168 (FKVFGLTAATLVNTLLTVVYL).

This sequence belongs to the YciB family.

Its subcellular location is the cell inner membrane. Functionally, plays a role in cell envelope biogenesis, maintenance of cell envelope integrity and membrane homeostasis. This chain is Inner membrane-spanning protein YciB, found in Shewanella amazonensis (strain ATCC BAA-1098 / SB2B).